The primary structure comprises 224 residues: UPF0758 protein Mmwyl1_0624 (224 aa).

Positions 102–224 constitute an MPN domain; sequence VFASAEHVRT…PVSLAERGLV (123 aa). Histidine 173, histidine 175, and aspartate 186 together coordinate Zn(2+). Residues 173-186 carry the JAMM motif motif; it reads HNHPSGIAEPSQAD.

This sequence belongs to the UPF0758 family.

In Marinomonas sp. (strain MWYL1), this protein is UPF0758 protein Mmwyl1_0624.